Reading from the N-terminus, the 218-residue chain is Methylthioribulose-1-phosphate dehydratase (218 aa).

Positions 107 and 109 each coordinate Zn(2+).

It belongs to the aldolase class II family. MtnB subfamily. It depends on Zn(2+) as a cofactor.

It catalyses the reaction 5-(methylsulfanyl)-D-ribulose 1-phosphate = 5-methylsulfanyl-2,3-dioxopentyl phosphate + H2O. Its pathway is amino-acid biosynthesis; L-methionine biosynthesis via salvage pathway; L-methionine from S-methyl-5-thio-alpha-D-ribose 1-phosphate: step 2/6. Functionally, catalyzes the dehydration of methylthioribulose-1-phosphate (MTRu-1-P) into 2,3-diketo-5-methylthiopentyl-1-phosphate (DK-MTP-1-P). The sequence is that of Methylthioribulose-1-phosphate dehydratase from Xylella fastidiosa (strain M12).